We begin with the raw amino-acid sequence, 302 residues long: Urease accessory protein UreD 2 (302 aa).

It belongs to the UreD family. As to quaternary structure, ureD, UreF and UreG form a complex that acts as a GTP-hydrolysis-dependent molecular chaperone, activating the urease apoprotein by helping to assemble the nickel containing metallocenter of UreC. The UreE protein probably delivers the nickel.

It is found in the cytoplasm. Functionally, required for maturation of urease via the functional incorporation of the urease nickel metallocenter. This is Urease accessory protein UreD 2 from Brucella melitensis biotype 1 (strain ATCC 23456 / CCUG 17765 / NCTC 10094 / 16M).